We begin with the raw amino-acid sequence, 310 residues long: 4-diphosphocytidyl-2-C-methyl-D-erythritol kinase (310 aa).

The active site involves K11. 95–105 (PIGAGLAGGSA) is a binding site for ATP. Residue D137 is part of the active site.

Belongs to the GHMP kinase family. IspE subfamily.

It catalyses the reaction 4-CDP-2-C-methyl-D-erythritol + ATP = 4-CDP-2-C-methyl-D-erythritol 2-phosphate + ADP + H(+). It functions in the pathway isoprenoid biosynthesis; isopentenyl diphosphate biosynthesis via DXP pathway; isopentenyl diphosphate from 1-deoxy-D-xylulose 5-phosphate: step 3/6. Catalyzes the phosphorylation of the position 2 hydroxy group of 4-diphosphocytidyl-2C-methyl-D-erythritol. This is 4-diphosphocytidyl-2-C-methyl-D-erythritol kinase from Acaryochloris marina (strain MBIC 11017).